The following is a 431-amino-acid chain: uncharacterized protein (431 aa).

4 helical membrane passes run 228-248 (GLLS…HYLS), 279-299 (IGLP…NFTF), 349-369 (ILWP…FLWI), and 388-408 (MIFN…LKLY).

It is found in the membrane. This is an uncharacterized protein from Saccharomyces cerevisiae (strain ATCC 204508 / S288c) (Baker's yeast).